A 54-amino-acid polypeptide reads, in one-letter code: Large ribosomal subunit protein bL33A (54 aa).

This sequence belongs to the bacterial ribosomal protein bL33 family.

This chain is Large ribosomal subunit protein bL33A, found in Mycobacteroides abscessus (strain ATCC 19977 / DSM 44196 / CCUG 20993 / CIP 104536 / JCM 13569 / NCTC 13031 / TMC 1543 / L948) (Mycobacterium abscessus).